Here is a 466-residue protein sequence, read N- to C-terminus: 3-isopropylmalate dehydratase large subunit (466 aa).

Residues C347, C407, and C410 each contribute to the [4Fe-4S] cluster site.

This sequence belongs to the aconitase/IPM isomerase family. LeuC type 1 subfamily. In terms of assembly, heterodimer of LeuC and LeuD. It depends on [4Fe-4S] cluster as a cofactor.

It catalyses the reaction (2R,3S)-3-isopropylmalate = (2S)-2-isopropylmalate. The protein operates within amino-acid biosynthesis; L-leucine biosynthesis; L-leucine from 3-methyl-2-oxobutanoate: step 2/4. Catalyzes the isomerization between 2-isopropylmalate and 3-isopropylmalate, via the formation of 2-isopropylmaleate. This is 3-isopropylmalate dehydratase large subunit from Klebsiella pneumoniae subsp. pneumoniae (strain ATCC 700721 / MGH 78578).